The primary structure comprises 283 residues: NADH-ubiquinone oxidoreductase 30.4 kDa subunit, mitochondrial (283 aa).

The N-terminal 17 residues, 1-17, are a transit peptide targeting the mitochondrion; that stretch reads MASKLCRSRALASALRS. The tract at residues 258 to 283 is disordered; sequence GAGIDRKPESFKLPTPKPETKPEEKK.

It belongs to the complex I 30 kDa subunit family. In terms of assembly, complex I is composed of about 40 different subunits. This is a component of the iron-sulfur protein fraction.

Its subcellular location is the mitochondrion inner membrane. It carries out the reaction a ubiquinone + NADH + 5 H(+)(in) = a ubiquinol + NAD(+) + 4 H(+)(out). Functionally, core subunit of the mitochondrial membrane respiratory chain NADH dehydrogenase (Complex I) that is believed to belong to the minimal assembly required for catalysis. Complex I functions in the transfer of electrons from NADH to the respiratory chain. The immediate electron acceptor for the enzyme is believed to be ubiquinone. The sequence is that of NADH-ubiquinone oxidoreductase 30.4 kDa subunit, mitochondrial (nuo-31) from Neurospora crassa (strain ATCC 24698 / 74-OR23-1A / CBS 708.71 / DSM 1257 / FGSC 987).